Reading from the N-terminus, the 118-residue chain is Large ribosomal subunit protein bL20 (118 aa).

Belongs to the bacterial ribosomal protein bL20 family.

Functionally, binds directly to 23S ribosomal RNA and is necessary for the in vitro assembly process of the 50S ribosomal subunit. It is not involved in the protein synthesizing functions of that subunit. The protein is Large ribosomal subunit protein bL20 of Bacillus cytotoxicus (strain DSM 22905 / CIP 110041 / 391-98 / NVH 391-98).